A 219-amino-acid polypeptide reads, in one-letter code: Probable N-acetyltransferase camello (219 aa).

2 consecutive transmembrane segments (helical) span residues 42–62 and 64–84; these read FYFI…SYVL and LTSL…EFHG. The 157-residue stretch at 62–218 folds into the N-acetyltransferase domain; that stretch reads LSLTSLVALL…TVIYYRYDIK (157 aa).

It belongs to the camello family. As to expression, at the beginning of gastrulation, expressed in deep cells of the presumptive mesoderm. At later gastrulation stages, expressed at the interface between already involuted and preinvoluted mesoderm. At late neurula and tailbud stages, expressed in the deep mass of cells lying ventrally and laterally to the closed blastopore.

It is found in the golgi apparatus membrane. Its function is as follows. Plays a role in regulation of gastrulation, possibly by controlled reduction of cell adhesion which is necessary for optimal cell motility. In Xenopus laevis (African clawed frog), this protein is Probable N-acetyltransferase camello.